The following is a 213-amino-acid chain: Protein-L-isoaspartate O-methyltransferase (213 aa).

Serine 64 is a catalytic residue.

Belongs to the methyltransferase superfamily. L-isoaspartyl/D-aspartyl protein methyltransferase family.

The protein localises to the cytoplasm. It catalyses the reaction [protein]-L-isoaspartate + S-adenosyl-L-methionine = [protein]-L-isoaspartate alpha-methyl ester + S-adenosyl-L-homocysteine. Functionally, catalyzes the methyl esterification of L-isoaspartyl residues in peptides and proteins that result from spontaneous decomposition of normal L-aspartyl and L-asparaginyl residues. It plays a role in the repair and/or degradation of damaged proteins. The sequence is that of Protein-L-isoaspartate O-methyltransferase from Christiangramia forsetii (strain DSM 17595 / CGMCC 1.15422 / KT0803) (Gramella forsetii).